The chain runs to 560 residues: 2-succinyl-5-enolpyruvyl-6-hydroxy-3-cyclohexene-1-carboxylate synthase (560 aa).

The protein belongs to the TPP enzyme family. MenD subfamily. As to quaternary structure, homodimer. It depends on Mg(2+) as a cofactor. The cofactor is Mn(2+). Requires thiamine diphosphate as cofactor.

It carries out the reaction isochorismate + 2-oxoglutarate + H(+) = 5-enolpyruvoyl-6-hydroxy-2-succinyl-cyclohex-3-ene-1-carboxylate + CO2. Its pathway is quinol/quinone metabolism; 1,4-dihydroxy-2-naphthoate biosynthesis; 1,4-dihydroxy-2-naphthoate from chorismate: step 2/7. The protein operates within quinol/quinone metabolism; menaquinone biosynthesis. Catalyzes the thiamine diphosphate-dependent decarboxylation of 2-oxoglutarate and the subsequent addition of the resulting succinic semialdehyde-thiamine pyrophosphate anion to isochorismate to yield 2-succinyl-5-enolpyruvyl-6-hydroxy-3-cyclohexene-1-carboxylate (SEPHCHC). The protein is 2-succinyl-5-enolpyruvyl-6-hydroxy-3-cyclohexene-1-carboxylate synthase of Lactococcus lactis subsp. lactis (strain IL1403) (Streptococcus lactis).